A 257-amino-acid polypeptide reads, in one-letter code: MAWSAAQYTKFEDERTRPARDLLAQVTELPDGPAFDLGCGPGNSTELILNRFRDNPLTGIDSDEDMLSAARTRLPELRFEKADLASWVPPAESALFFANAVFQWLPEHIVLFERLILALAPGGTLAVQMPDNLDEPTHVLMEETAEESAFASAFAGRAARRKSLPSPANYVERLTAKDVRIDVWHTVYYHQLANANAIVEWVKGTGLRPYLDALPAARRAGYLAAYADKIRKAYPTMKDGRVLLRFPRLFIVATRNR.

This sequence belongs to the methyltransferase superfamily. Tam family.

It is found in the cytoplasm. The enzyme catalyses trans-aconitate + S-adenosyl-L-methionine = (E)-3-(methoxycarbonyl)pent-2-enedioate + S-adenosyl-L-homocysteine. Its function is as follows. Catalyzes the S-adenosylmethionine monomethyl esterification of trans-aconitate. The protein is Trans-aconitate 2-methyltransferase of Sinorhizobium medicae (strain WSM419) (Ensifer medicae).